A 343-amino-acid chain; its full sequence is MSLAGKKITVHDMSLRDGMHPKRHQITLDQMRNIARGLDAAGVPLIEVTHGDGLGGASVNYGFPAHTDEAYLSAVIPELKQAKVSALLLPGIGTVEHLRMAHELGVGTIRVATHCTEADVSEQHIGLARTLGLDTVGFLMMAHMSSPEQLVVQAKLMESYGANCIYITDSAGHMLPDDVTARISQVRDALKPETELGFHGHHNLAMGVANSVAAVAAGANRIDAAAAGLGAGAGNTPMEVFVAVCDRMGIETGVDVFAISDVAEDLVVPIMDAPIRLDRDALTLGYAGVYSSFLLFAKRAEAKYGIPARDILVELGRQRLVGGQEDMIEDAALTMVRAREVVA.

A Pyruvate carboxyltransferase domain is found at 8–260; sequence ITVHDMSLRD…ETGVDVFAIS (253 aa). Residue 16-17 coordinates substrate; it reads RD. Asp-17 contributes to the Mn(2+) binding site. His-20 serves as the catalytic Proton acceptor. Residues Ser-170 and His-199 each coordinate substrate. The Mn(2+) site is built by His-199 and His-201. Residue Tyr-290 participates in substrate binding.

It belongs to the 4-hydroxy-2-oxovalerate aldolase family.

The catalysed reaction is (S)-4-hydroxy-2-oxopentanoate = acetaldehyde + pyruvate. This chain is 4-hydroxy-2-oxovalerate aldolase 2, found in Burkholderia lata (strain ATCC 17760 / DSM 23089 / LMG 22485 / NCIMB 9086 / R18194 / 383).